Here is a 123-residue protein sequence, read N- to C-terminus: Small ribosomal subunit protein uS12 (123 aa).

Position 89 is a 3-methylthioaspartic acid (Asp-89). The disordered stretch occupies residues 101–123 (SLDTAGVKDRKQSRSKYGAKRPK). Residues 113 to 123 (SRSKYGAKRPK) are compositionally biased toward basic residues.

Belongs to the universal ribosomal protein uS12 family. In terms of assembly, part of the 30S ribosomal subunit. Contacts proteins S8 and S17. May interact with IF1 in the 30S initiation complex.

In terms of biological role, with S4 and S5 plays an important role in translational accuracy. Interacts with and stabilizes bases of the 16S rRNA that are involved in tRNA selection in the A site and with the mRNA backbone. Located at the interface of the 30S and 50S subunits, it traverses the body of the 30S subunit contacting proteins on the other side and probably holding the rRNA structure together. The combined cluster of proteins S8, S12 and S17 appears to hold together the shoulder and platform of the 30S subunit. In Laribacter hongkongensis (strain HLHK9), this protein is Small ribosomal subunit protein uS12.